A 323-amino-acid polypeptide reads, in one-letter code: Aquaporin-2 (323 aa).

3 helical membrane-spanning segments follow: residues 32–54 (FLAVFVLMVFTEGCSASAIFTHR), 74–96 (YVAGGVTGAFLNPAIAVAFSVLG), and 103–123 (CFCYMIAQYLGAFLASLAIYA). The short motif at 85 to 87 (NPA) is the NPA 1 element. Asparagine 143 carries an N-linked (GlcNAc...) asparagine glycan. The next 2 membrane-spanning stretches (helical) occupy residues 161–181 (GAFVDQVFGTALLIIVVLSMV) and 193–213 (FPIAIGLLIVVLDISLAYNAG). Residues 217 to 219 (NPS) carry the NPA 2 motif. The chain crosses the membrane as a helical span at residues 243-263 (YTWFFVPVVGSHAGAIVGAVI). Asparagine 292 is a glycosylation site (N-linked (GlcNAc...) asparagine).

Belongs to the MIP/aquaporin (TC 1.A.8) family.

It localises to the cell membrane. It catalyses the reaction H2O(in) = H2O(out). It carries out the reaction glycerol(in) = glycerol(out). Its function is as follows. Aquaglyceroporin that may modulate the water content and osmolytes during anhydrobiosis. The sequence is that of Aquaporin-2 from Milnesium tardigradum (Water bear).